The chain runs to 327 residues: Spermidine/putrescine import ATP-binding protein PotA (327 aa).

The 231-residue stretch at 5–235 (IKVEAVEKHF…PKTLFVATFI (231 aa)) folds into the ABC transporter domain. Position 37–44 (37–44 (GPSGCGKT)) interacts with ATP.

It belongs to the ABC transporter superfamily. Spermidine/putrescine importer (TC 3.A.1.11.1) family. In terms of assembly, the complex is composed of two ATP-binding proteins (PotA), two transmembrane proteins (PotB and PotC) and a solute-binding protein (PotD).

It is found in the cell membrane. The catalysed reaction is ATP + H2O + polyamine-[polyamine-binding protein]Side 1 = ADP + phosphate + polyamineSide 2 + [polyamine-binding protein]Side 1.. Functionally, part of the ABC transporter complex PotABCD involved in spermidine/putrescine import. Responsible for energy coupling to the transport system. This chain is Spermidine/putrescine import ATP-binding protein PotA, found in Bacillus thuringiensis subsp. konkukian (strain 97-27).